The sequence spans 89 residues: DNA-directed RNA polymerase subunit omega (89 aa).

Belongs to the RNA polymerase subunit omega family. As to quaternary structure, the RNAP catalytic core consists of 2 alpha, 1 beta, 1 beta' and 1 omega subunit. When a sigma factor is associated with the core the holoenzyme is formed, which can initiate transcription.

The enzyme catalyses RNA(n) + a ribonucleoside 5'-triphosphate = RNA(n+1) + diphosphate. Promotes RNA polymerase assembly. Latches the N- and C-terminal regions of the beta' subunit thereby facilitating its interaction with the beta and alpha subunits. This Clavibacter michiganensis subsp. michiganensis (strain NCPPB 382) protein is DNA-directed RNA polymerase subunit omega.